A 445-amino-acid polypeptide reads, in one-letter code: GRAM domain-containing protein 2B (445 aa).

N-acetylmethionine is present on methionine 1. The tract at residues 1–118 (MVKKRLSSSD…ERKKSSSSSQ (118 aa)) is disordered. 2 stretches are compositionally biased toward polar residues: residues 18-44 (PSNSKTSAEAPHSSTDSPSSVFLSSEA) and 56-68 (KSPTAQSPTSSVE). Over residues 82–93 (SKSSFDGSSLLS) the composition is skewed to low complexity. The span at 94-112 (DKNDCKTESKTDSKTERKK) shows a compositional bias: basic and acidic residues. Positions 123-190 (MHFHKLFLDV…FSVTLIKKTK (68 aa)) constitute a GRAM domain. The span at 233–246 (TSVGNSPNPSSAEN) shows a compositional bias: polar residues. Residues 233-252 (TSVGNSPNPSSAENSFRADR) form a disordered region. Phosphoserine occurs at positions 238, 255, and 265. The disordered stretch occupies residues 277-331 (DLEGYSSSGSQTPESENSRDFHVTESQTVLNVTKGETKPPRTDAHGSRAPDGKAK). Over residues 281 to 291 (YSSSGSQTPES) the composition is skewed to polar residues. A compositionally biased stretch (basic and acidic residues) spans 311-330 (GETKPPRTDAHGSRAPDGKA).

The protein is GRAM domain-containing protein 2B (Gramd2b) of Mus musculus (Mouse).